Here is a 485-residue protein sequence, read N- to C-terminus: Mitochondria-eating protein (485 aa).

Positions T112 to L210 form a coiled coil. Composition is skewed to low complexity over residues L214 to S241 and R471 to F485. Disordered stretches follow at residues L214–L244 and R451–F485.

Belongs to the MIEAP family.

It is found in the cytoplasm. The protein localises to the mitochondrion outer membrane. Its subcellular location is the mitochondrion matrix. In terms of biological role, key regulator of mitochondrial quality that mediates the repairing or degradation of unhealthy mitochondria in response to mitochondrial damage. Mediator of mitochondrial protein catabolic process (also named MALM) by mediating the degradation of damaged proteins inside mitochondria by promoting the accumulation in the mitochondrial matrix of hydrolases that are characteristic of the lysosomal lumen. Also involved in mitochondrion degradation of damaged mitochondria by promoting the formation of vacuole-like structures (named MIV), which engulf and degrade unhealthy mitochondria by accumulating lysosomes. Binds cardiolipin. May form molecular condensates (non-membrane-bounded organelles) within mitochondria that compartmentalize and promote cardiolipin metabolism. The sequence is that of Mitochondria-eating protein (spata18) from Xenopus laevis (African clawed frog).